A 920-amino-acid chain; its full sequence is WD repeat-containing protein 47 (920 aa).

The LisH domain occupies 10–42 (KEVEIIKLILDFLNSKKLHISMLALEKESGVIN). A CTLH domain is found at 45–102 (FSDDMLFLRQLILDGQWDEVLQFIQPLECMEKFDKKRFRYIILKQKFLEALCVNNAMS). A Phosphothreonine modification is found at T285. Residues S289, S292, S297, and S312 each carry the phosphoserine modification. Residues 371 to 380 (YEESPERSDT) are compositionally biased toward basic and acidic residues. Residues 371-422 (YEESPERSDTPVEAQQPVSSEAMCQGSGLEKEPANGAQNPVPAKQEKNELRD) are disordered. S423 carries the phosphoserine modification. The interval 501–594 (LNQQCSGSKN…RSKGEEDDKS (94 aa)) is disordered. Over residues 506–523 (SGSKNNGSNNSSVTSFST) the composition is skewed to low complexity. A compositionally biased stretch (polar residues) spans 538 to 552 (NIHTSTPRNPGSTNH). T543 bears the Phosphothreonine mark. 7 WD repeats span residues 605–644 (EDTQAVRAVAFHPSGSLYAVGSNSKTLRVCAYPEKMDASA), 660–699 (HHKGSIYCVAWSPCGQLLATGSNDKYVKVLPFNAETCNAT), 707–749 (MHDG…GQGL), 754–792 (GHTGHILALYTWSGWMIASGSQDKTVRFWDLRVPSCVRV), 799–838 (GTGSAVASVAVDPSGRLLATGQEDSSCMLYDIRGGRMVQS), 841–880 (PHSSDVRSVRFSPGAHYLLTGSYDMKIKVTDLQGDLTKQL), and 887–919 (EHKDKVIQCRWHTQDLSFLSSSADRTVTLWTYS).

In terms of assembly, interacts with MAP1S (via WD repeats). Enriched in the nervous system (at protein level).

Its subcellular location is the cytoplasm. The protein resides in the cytoskeleton. In Mus musculus (Mouse), this protein is WD repeat-containing protein 47 (Wdr47).